Reading from the N-terminus, the 826-residue chain is Villin-1 (826 aa).

The interval Met1–Asp734 is core. The Gelsolin-like 1 repeat unit spans residues Met27–Gly76. An a 1,2-diacyl-sn-glycero-3-phospho-(1D-myo-inositol-4,5-bisphosphate)-binding site is contributed by Lys112 to Gln119. Positions Val129–Gln137 are crucial for binding an actin filament. Position 138-146 (Arg138–Lys146) interacts with a 1,2-diacyl-sn-glycero-3-phospho-(1D-myo-inositol-4,5-bisphosphate). Gelsolin-like repeat units follow at residues Val148–Leu188, Leu265–Gln309, Gln408–Ala457, Thr528–Glu568, and Phe631–Glu672. A headpiece region spans residues Asn735–Phe826. In terms of domain architecture, HP spans Pro760 to Phe826. The interval Lys820–Lys823 is absolutely required for activity.

Belongs to the villin/gelsolin family. In terms of assembly, monomer. Homodimer. Associates with F-actin; the association with F-actin is inhibited by tropomyosin. In terms of processing, phosphorylated on tyrosine residues. The unphosphorylated form increases the initial rate of actin-nucleating activity, whereas the tyrosine-phosphorylated form inhibits actin-nucleating activity, enhances actin-bundling activity and enhances actin-severing activity by reducing high Ca(2+) requirements. The tyrosine-phosphorylated form does not regulate actin-capping activity. Tyrosine phosphorylation is essential for cell migration: tyrosine phosphorylation sites in the N-terminus half regulate actin reorganization and cell morphology, whereas tyrosine phosphorylation sites in the C-terminus half regulate cell migration. Tyrosine phosphorylation is induced by epidermal growth factor (EGF) and stimulates cell migration. In terms of tissue distribution, specifically expressed in epithelial cells. Component of brush border microvilli.

It is found in the cytoplasm. Its subcellular location is the cytoskeleton. It localises to the cell projection. The protein resides in the microvillus. The protein localises to the lamellipodium. It is found in the ruffle. Its subcellular location is the filopodium tip. It localises to the filopodium. Epithelial cell-specific Ca(2+)-regulated actin-modifying protein that modulates the reorganization of microvillar actin filaments. Plays a role in the actin nucleation, actin filament bundle assembly, actin filament capping and severing. Binds phosphatidylinositol 4,5-bisphosphate (PIP2) and lysophosphatidic acid (LPA); binds LPA with higher affinity than PIP2. Binding to LPA increases its phosphorylation by SRC and inhibits all actin-modifying activities. Binding to PIP2 inhibits actin-capping and -severing activities but enhances actin-bundling activity. Regulates the intestinal epithelial cell morphology, cell invasion, cell migration and apoptosis. Protects against apoptosis induced by dextran sodium sulfate (DSS) in the gastrointestinal epithelium. Appears to regulate cell death by maintaining mitochondrial integrity. Enhances hepatocyte growth factor (HGF)-induced epithelial cell motility, chemotaxis and wound repair. Its actin-bundling activity is inhibited by tropomyosin. This Gallus gallus (Chicken) protein is Villin-1 (VIL1).